Reading from the N-terminus, the 289-residue chain is MILLQHAVLPPPKQPSPSPPMSVATRSTGTLQLPPQKPFGQEASLPLAGEEELSKGGEQDCALEELCKPLYCKLCNVTLNSAQQAQAHYQGKNHGKKLRNYYAANSCPPPARMSNVVEPAATPVVPVPPQMGSFKPGGRVILATENDYCKLCDASFSSPAVAQAHYQGKNHAKRLRLAEAQSNSFSESSELGQRRARKEGNEFKMMPNRRNMYTVQNNSAGPYFNPRSRQRIPRDLAMCVTPSGQFYCSMCNVGAGEEMEFRQHLESKQHKSKVSEQRYRNEMENLGYV.

Positions 1-42 (MILLQHAVLPPPKQPSPSPPMSVATRSTGTLQLPPQKPFGQE) are disordered. Positions 9-20 (LPPPKQPSPSPP) are enriched in pro residues. Over residues 24–33 (ATRSTGTLQL) the composition is skewed to polar residues. 2 consecutive Matrin-type zinc fingers follow at residues 70–100 (LYCK…KLRN) and 147–177 (DYCK…RLRL). The segment covering 180–191 (AQSNSFSESSEL) has biased composition (polar residues). The disordered stretch occupies residues 180–201 (AQSNSFSESSELGQRRARKEGN). The Matrin-type 3 zinc-finger motif lies at 246–276 (FYCSMCNVGAGEEMEFRQHLESKQHKSKVSE).

Interacts with dsRNA. As to expression, highly expressed in adult brain, and moderately in adult kidney and testis. Not detected in fetal brain, heart, pancreas, adrenal gland, liver or small intestine.

It is found in the nucleus. It localises to the nucleolus. Acts as a bona fide target gene of p53/TP53. May play a role in the TP53-dependent growth regulatory pathway. May contribute to TP53-mediated apoptosis by regulation of TP53 expression and translocation to the nucleus and nucleolus. The protein is Zinc finger matrin-type protein 3 of Homo sapiens (Human).